Consider the following 504-residue polypeptide: Anaerobic nitric oxide reductase transcription regulator NorR (504 aa).

At D57 the chain carries 4-aspartylphosphate. The Sigma-54 factor interaction domain occupies 187–416 (MIGLSPGMTQ…LEHAIHRAVV (230 aa)). ATP-binding positions include 215–222 (GETGTGKE) and 278–287 (ADNGTLFLDE). A DNA-binding region (H-T-H motif) is located at residues 479–498 (WAACARMLETDVANLHRLAK).

Its pathway is nitrogen metabolism; nitric oxide reduction. Required for the expression of anaerobic nitric oxide (NO) reductase, acts as a transcriptional activator for at least the norVW operon. Activation also requires sigma-54. This is Anaerobic nitric oxide reductase transcription regulator NorR from Escherichia coli O139:H28 (strain E24377A / ETEC).